We begin with the raw amino-acid sequence, 361 residues long: MALTRLLIKDFRNIESADLALAAGFNFLVGPNGSGKTSVLEAVYTLGHGRAFRSLQAGRVIRHECAEFVLHGRVDANEREASVGLSKSRQGDTKVRIDGTDGHKVAELAQMLPMQLITPEGFTLLNGGPKFRRAFLDWGCFHNEPGFFTAWSNLKRLLKQRNAALRQVSRYTQIRAWDQEIIPLAERISEWRAAYSDAIAADISATCALFLPEFALSFFFQRGWDKESDYGELLARQFERDRALTYTAVGPHKADFRIRADGTPVEDLLSRGQLKLLMCALRLAQGEFLTRQSGRRCLYLLDDFASELDTGRRRLLAERLKATQAQVFVSAVSAEQVADMVGEKGKMFRVEHGKIEVQPQD.

30–37 (GPNGSGKT) contacts ATP.

This sequence belongs to the RecF family.

The protein resides in the cytoplasm. In terms of biological role, the RecF protein is involved in DNA metabolism; it is required for DNA replication and normal SOS inducibility. RecF binds preferentially to single-stranded, linear DNA. It also seems to bind ATP. This chain is DNA replication and repair protein RecF, found in Yersinia pseudotuberculosis serotype IB (strain PB1/+).